A 390-amino-acid chain; its full sequence is Homeobox protein Hox-B2a (390 aa).

4 disordered regions span residues 40–73 (STAI…TASN), 81–100 (TAPP…GAPL), 108–155 (KEKK…LDNV), and 211–338 (MKHK…SLPD). Over residues 52–73 (PSLSPCTGNQARPRSQKRTASN) the composition is skewed to polar residues. An Antp-type hexapeptide motif is present at residues 103–108 (EFPWMK). A compositionally biased stretch (low complexity) spans 118 to 135 (KPGATAAAAAASPSQASS). The segment at residues 158-217 (SRRLRTAYTNTQLLELEKEFHFNKYLCRPRRVEIAALLDLTERQVKVWFQNRRMKHKRQT) is a DNA-binding region (homeobox). Positions 244 to 262 (SSQSLEVSGSGSAAPSESE) are enriched in low complexity. The span at 263–290 (TCPTTAAYTNSSDKSQPTPEEGQASQPE) shows a compositional bias: polar residues.

It belongs to the Antp homeobox family. Proboscipedia subfamily.

The protein localises to the nucleus. Functionally, sequence-specific transcription factor which is part of a developmental regulatory system that provides cells with specific positional identities on the anterior-posterior axis. Plays an important role in the patterning of hindbrain and pharyngeal arches. The sequence is that of Homeobox protein Hox-B2a (hoxb2a) from Danio rerio (Zebrafish).